The following is a 312-amino-acid chain: Phosphoribosylaminoimidazole-succinocarboxamide synthase (312 aa).

This sequence belongs to the SAICAR synthetase family.

It carries out the reaction 5-amino-1-(5-phospho-D-ribosyl)imidazole-4-carboxylate + L-aspartate + ATP = (2S)-2-[5-amino-1-(5-phospho-beta-D-ribosyl)imidazole-4-carboxamido]succinate + ADP + phosphate + 2 H(+). It participates in purine metabolism; IMP biosynthesis via de novo pathway; 5-amino-1-(5-phospho-D-ribosyl)imidazole-4-carboxamide from 5-amino-1-(5-phospho-D-ribosyl)imidazole-4-carboxylate: step 1/2. This is Phosphoribosylaminoimidazole-succinocarboxamide synthase from Legionella pneumophila (strain Lens).